We begin with the raw amino-acid sequence, 417 residues long: Tyrosine--tRNA ligase (417 aa).

An L-tyrosine-binding site is contributed by tyrosine 34. The 'HIGH' region motif lies at 39–48 (PSGDSLHIGH). L-tyrosine contacts are provided by tyrosine 165 and glutamine 169. Positions 227-231 (KFGKT) match the 'KMSKS' region motif. ATP is bound at residue lysine 230. The region spanning 349-415 (ANIVDWLVDT…GKKNYTLAKV (67 aa)) is the S4 RNA-binding domain.

This sequence belongs to the class-I aminoacyl-tRNA synthetase family. TyrS type 1 subfamily. Homodimer.

It localises to the cytoplasm. The enzyme catalyses tRNA(Tyr) + L-tyrosine + ATP = L-tyrosyl-tRNA(Tyr) + AMP + diphosphate + H(+). Catalyzes the attachment of tyrosine to tRNA(Tyr) in a two-step reaction: tyrosine is first activated by ATP to form Tyr-AMP and then transferred to the acceptor end of tRNA(Tyr). In Limosilactobacillus fermentum (strain NBRC 3956 / LMG 18251) (Lactobacillus fermentum), this protein is Tyrosine--tRNA ligase.